The following is a 478-amino-acid chain: MTLSFITRWRDELPATYTALSPTPLNNARLIWHNTELANTLSIPSSLFKNGAGVWGGETLLPGMSPLAQVYSGHQFGVWAGQLGDGRGILLGEQLLADGTTMDWHLKGAGLTPYSRMGDGRAVLRSTIRESLASEAMHYLGIPTTRALSIVTSDSPVYRETVEPGAMLMRVAPSHLRFGHFEHFYYRREPEKVRQLADFAIRHYWSYLEDDEDKYRLWFSDVVARTASLIAQWQTVGFAHGVMNTDNMSLLGLTLDYGPFGFLDDYEPGFICNHSDHQGRYSFDNQPAVALWNLHRLAQTLSPFVAVDALNEALDSYQQVLLTHYGQRMRQKLGFMTEQKEDNALLNELFSLMARERSDYTRTFRMLSLTEQHSAASPLRDEFIDRAAFDDWFARYRGRLQQDEVSDSERQQLMQSVNPALVLRNWLAQRAIEAAEKGDMTELHRLHEALRNPFSDRDDDYVSRPPDWGKRLEVSCSS.

Residues Gly84, Gly86, Arg87, Lys107, Asp119, Gly120, Arg170, and Arg177 each coordinate ATP. Residue Asp246 is the Proton acceptor of the active site. Mg(2+)-binding residues include Asn247 and Asp256. An ATP-binding site is contributed by Asp256.

It belongs to the SELO family. Mg(2+) is required as a cofactor. Mn(2+) serves as cofactor.

It catalyses the reaction L-seryl-[protein] + ATP = 3-O-(5'-adenylyl)-L-seryl-[protein] + diphosphate. The catalysed reaction is L-threonyl-[protein] + ATP = 3-O-(5'-adenylyl)-L-threonyl-[protein] + diphosphate. The enzyme catalyses L-tyrosyl-[protein] + ATP = O-(5'-adenylyl)-L-tyrosyl-[protein] + diphosphate. It carries out the reaction L-histidyl-[protein] + UTP = N(tele)-(5'-uridylyl)-L-histidyl-[protein] + diphosphate. It catalyses the reaction L-seryl-[protein] + UTP = O-(5'-uridylyl)-L-seryl-[protein] + diphosphate. The catalysed reaction is L-tyrosyl-[protein] + UTP = O-(5'-uridylyl)-L-tyrosyl-[protein] + diphosphate. Its function is as follows. Nucleotidyltransferase involved in the post-translational modification of proteins. It can catalyze the addition of adenosine monophosphate (AMP) or uridine monophosphate (UMP) to a protein, resulting in modifications known as AMPylation and UMPylation. The chain is Protein nucleotidyltransferase YdiU from Escherichia coli O139:H28 (strain E24377A / ETEC).